Reading from the N-terminus, the 318-residue chain is Ribose-phosphate pyrophosphokinase 1 (318 aa).

ATP contacts are provided by residues 43–45 (DGE) and 102–103 (RQ). His136 and Asp176 together coordinate Mg(2+). Lys199 is a catalytic residue. Residues Arg201, Asp225, and 229 to 233 (DTAGT) contribute to the D-ribose 5-phosphate site.

The protein belongs to the ribose-phosphate pyrophosphokinase family. Class I subfamily. Homohexamer. It depends on Mg(2+) as a cofactor.

Its subcellular location is the cytoplasm. It catalyses the reaction D-ribose 5-phosphate + ATP = 5-phospho-alpha-D-ribose 1-diphosphate + AMP + H(+). The protein operates within metabolic intermediate biosynthesis; 5-phospho-alpha-D-ribose 1-diphosphate biosynthesis; 5-phospho-alpha-D-ribose 1-diphosphate from D-ribose 5-phosphate (route I): step 1/1. Functionally, involved in the biosynthesis of the central metabolite phospho-alpha-D-ribosyl-1-pyrophosphate (PRPP) via the transfer of pyrophosphoryl group from ATP to 1-hydroxyl of ribose-5-phosphate (Rib-5-P). The chain is Ribose-phosphate pyrophosphokinase 1 from Listeria innocua serovar 6a (strain ATCC BAA-680 / CLIP 11262).